Reading from the N-terminus, the 213-residue chain is Penicillin-binding protein activator LpoB (213 aa).

The signal sequence occupies residues 1–19 (MTKMSRYALITALAMFLAG). Cysteine 20 is lipidated: N-palmitoyl cysteine. Residue cysteine 20 is the site of S-diacylglycerol cysteine attachment. Residues 28–74 (PVEEVKPAPEQPAEPQQPVPTVPSVPTIPQQPGPIEHEDQTAPPAPH) are disordered. Pro residues predominate over residues 36–50 (PEQPAEPQQPVPTVP).

It belongs to the LpoB family. In terms of assembly, interacts with PBP1b.

Its subcellular location is the cell outer membrane. In terms of biological role, regulator of peptidoglycan synthesis that is essential for the function of penicillin-binding protein 1B (PBP1b). This chain is Penicillin-binding protein activator LpoB, found in Escherichia coli O157:H7.